The primary structure comprises 322 residues: NADH oxidoreductase HCR (322 aa).

The 101-residue stretch at 7 to 107 (QCPWRMQVHH…SDAMGEFTCD (101 aa)) folds into the FAD-binding FR-type domain. Positions 111–213 (EDKFLLLAAG…APYMDWVEQE (103 aa)) are oxidoreductase. Positions 237–322 (SGLKFTKLQP…CHPQGDLVLA (86 aa)) constitute a 2Fe-2S ferredoxin-type domain. Residues C273, C278, C281, and C311 each coordinate [2Fe-2S] cluster.

It in the N-terminal section; belongs to the FAD-binding oxidoreductase type 6 family. [2Fe-2S] cluster is required as a cofactor. The cofactor is FAD.

NADH oxidoreductase acting in concert with HCP. This chain is NADH oxidoreductase HCR (hcr), found in Escherichia coli (strain K12).